Consider the following 420-residue polypeptide: Gamma-glutamyl phosphate reductase (420 aa).

Belongs to the gamma-glutamyl phosphate reductase family.

Its subcellular location is the cytoplasm. It carries out the reaction L-glutamate 5-semialdehyde + phosphate + NADP(+) = L-glutamyl 5-phosphate + NADPH + H(+). The protein operates within amino-acid biosynthesis; L-proline biosynthesis; L-glutamate 5-semialdehyde from L-glutamate: step 2/2. Catalyzes the NADPH-dependent reduction of L-glutamate 5-phosphate into L-glutamate 5-semialdehyde and phosphate. The product spontaneously undergoes cyclization to form 1-pyrroline-5-carboxylate. The protein is Gamma-glutamyl phosphate reductase of Acidiphilium cryptum (strain JF-5).